A 382-amino-acid chain; its full sequence is Lipid-A-disaccharide synthase (382 aa).

Belongs to the LpxB family.

It carries out the reaction a lipid X + a UDP-2-N,3-O-bis[(3R)-3-hydroxyacyl]-alpha-D-glucosamine = a lipid A disaccharide + UDP + H(+). It functions in the pathway bacterial outer membrane biogenesis; LPS lipid A biosynthesis. Condensation of UDP-2,3-diacylglucosamine and 2,3-diacylglucosamine-1-phosphate to form lipid A disaccharide, a precursor of lipid A, a phosphorylated glycolipid that anchors the lipopolysaccharide to the outer membrane of the cell. The protein is Lipid-A-disaccharide synthase of Koribacter versatilis (strain Ellin345).